A 180-amino-acid chain; its full sequence is Secreted RxLR effector protein 19 (180 aa).

The N-terminal stretch at 1–19 (MKLLLRALATFVLLNGVDS) is a signal peptide. The Jacalin-type lectin domain maps to 25–171 (FQKCNVTGGP…IFALGALWGP (147 aa)). The RxLR-dEER signature appears at 52–77 (RALRLCGVDFVDGIGVTIWDLSVEEN).

This sequence belongs to the RxLR effector family.

Its subcellular location is the secreted. It is found in the host cytoplasm. It localises to the host nucleus. Effector that partially suppresses the tobacco programmed cell death induced by cell death-inducing proteins. The protein is Secreted RxLR effector protein 19 of Plasmopara viticola (Downy mildew of grapevine).